The sequence spans 123 residues: Large ribosomal subunit protein eL8 (123 aa).

Belongs to the eukaryotic ribosomal protein eL8 family. As to quaternary structure, part of the 50S ribosomal subunit. Probably part of the RNase P complex.

It localises to the cytoplasm. In terms of biological role, multifunctional RNA-binding protein that recognizes the K-turn motif in ribosomal RNA, the RNA component of RNase P, box H/ACA, box C/D and box C'/D' sRNAs. The sequence is that of Large ribosomal subunit protein eL8 from Methanothermobacter thermautotrophicus (strain ATCC 29096 / DSM 1053 / JCM 10044 / NBRC 100330 / Delta H) (Methanobacterium thermoautotrophicum).